Consider the following 146-residue polypeptide: Hemoglobin subunit beta (146 aa).

One can recognise a Globin domain in the interval 2–146 (HWTAEEKQLI…VAHALARKYH (145 aa)). 2 residues coordinate heme b: H63 and H92.

It belongs to the globin family. As to quaternary structure, heterotetramer of two alpha chains and two beta chains. As to expression, red blood cells.

Functionally, involved in oxygen transport from the lung to the various peripheral tissues. The polypeptide is Hemoglobin subunit beta (HBB) (Ciconia ciconia (White stork)).